The following is a 1073-amino-acid chain: Activated Cdc42 kinase Ack (1073 aa).

The tract at residues 88–110 (IGGGKQPSSKKQSSAARESSQGN) is disordered. In terms of domain architecture, Protein kinase spans 123–383 (ITMGLKLGDG…PTFAALKEYL (261 aa)). ATP contacts are provided by residues 129–137 (LGDGSFGVV) and lysine 156. The active-site Proton acceptor is aspartate 250. One can recognise an SH3 domain in the interval 386–446 (MSPPVMRASR…PRNLLEQRKV (61 aa)). Disordered regions lie at residues 484 to 506 (QRKC…SSKQ), 803 to 834 (PLKN…VEAA), and 862 to 882 (AQPP…HQQQ). A compositionally biased stretch (low complexity) spans 812-826 (SVHSNHSSPSSTASP). In terms of domain architecture, UBA spans 1029–1072 (GLATRHYKIDQLARLGVAGRPQCEQALQQTNWSLEVAAELLLNA).

The protein belongs to the protein kinase superfamily. Tyr protein kinase family. As to quaternary structure, interacts with yki and ex. Interacts with drk. Likely to be a member of an axonal guidance receptor complex that includes SH3PX1, dock and Dscam. Interacts (via N-terminus) with dock. Interacts with SH3PX1 (via SH3 domain). It depends on Mg(2+) as a cofactor. Post-translationally, phosphorylated. Autophosphorylated. In terms of tissue distribution, detected in ovaries (at protein level). In adults, relatively higher expression in the head compared to the body.

It localises to the cytoplasm. Its subcellular location is the cytoplasmic vesicle. The protein localises to the clathrin-coated vesicle. The enzyme catalyses L-tyrosyl-[protein] + ATP = O-phospho-L-tyrosyl-[protein] + ADP + H(+). It carries out the reaction L-threonyl-[protein] + ATP = O-phospho-L-threonyl-[protein] + ADP + H(+). Non-receptor tyrosine-protein and serine/threonine-protein kinase that is implicated in diverse biological functions such as cell survival, cell differentiation, cell growth and proliferation. Phosphorylates SH3PX1 and ex. Phosphorylates SH3PX1 predominantly on 'Tyr-56', which likely promotes the recruitment of SH3PX1 to an axonal guidance receptor complex that includes dock and Dscam; because phosphorylation of SH3PX1 increases its interaction with the complex member dock while decreasing its interaction with the actin cytoskeleton modulator WASp. In the wing and eye, promotes tissue growth, and during embryogenesis coordinates cell shape changes required for correct dorsal closure. Functions in the negative regulation of the Hippo/SWH (Sav/Wts/Hpo) signaling pathway by enhancing yki activity thereby promoting cell proliferation and inhibiting apoptosis. This is accomplished, at least in part, by phosphorylating ex thereby reducing its ability to efficiently activate the Hippo signaling cascade. In the eye disk, wing disk and possibly spermatids, inhibits programmed cell death induced by hid and rpr through a mechanism that is independent of the MAP kinase signal transduction pathway. Essential for male and female fertility. During oogenesis required for the correct temporal assembly, and consequently the catalytic activity of long Ctps filaments (cytoophidium) in the germline nurse cells, likely by phosphorylating an unidentified substrate that is essential for linking individual Ctps filaments into large, catalytically active assemblies. In Drosophila melanogaster (Fruit fly), this protein is Activated Cdc42 kinase Ack.